An 852-amino-acid chain; its full sequence is Tiger protein I3 (852 aa).

The signal sequence occupies residues 1-18 (MKILLFFILFYLFSFSIS). Residues 19–830 (YDEVIPLGYE…DVHQYSDARN (812 aa)) lie on the Extracellular side of the membrane. Residues Asn-31, Asn-47, Asn-67, Asn-97, Asn-129, Asn-201, Asn-215, Asn-228, Asn-260, Asn-323, Asn-352, Asn-356, Asn-404, Asn-441, Asn-476, Asn-483, Asn-501, Asn-512, Asn-574, Asn-592, Asn-635, Asn-658, Asn-661, Asn-679, Asn-680, Asn-723, Asn-757, Asn-761, Asn-773, Asn-785, and Asn-800 are each glycosylated (N-linked (GlcNAc...) asparagine). Residues 290–367 (IPSIVNSIPK…SSPIAVSIND (78 aa)) form the IPT/TIG domain. A helical membrane pass occupies residues 831–851 (IFQNLLLSILIIIIISLFISN). Ile-852 is a topological domain (cytoplasmic).

It localises to the membrane. This is Tiger protein I3 (tgrI3) from Dictyostelium discoideum (Social amoeba).